The following is a 447-amino-acid chain: Putative branched-chain amino acid carrier protein SAUSA300_1300 (447 aa).

Helical transmembrane passes span 6 to 26, 40 to 60, 74 to 94, 114 to 134, 143 to 163, 193 to 213, 229 to 249, 290 to 310, 326 to 346, 350 to 370, 382 to 402, and 417 to 437; these read WVIG…IFPP, ILAF…VGAL, PKFS…LFAI, SSIA…YICL, IGSL…IKGY, GYLT…VNAV, LTAG…LGYI, LLGI…IVAV, FVLV…NAVI, IPVL…ILIA, IPVI…LGWL, and LEWF…GIFV.

The protein belongs to the branched chain amino acid transporter family.

It is found in the cell membrane. Its function is as follows. Component of the transport system for branched-chain amino acids (leucine, isoleucine and valine), which is coupled to a proton motive force (Potential). Contributes to NaCl tolerance. In Staphylococcus aureus (strain USA300), this protein is Putative branched-chain amino acid carrier protein SAUSA300_1300.